The chain runs to 383 residues: Cobalt-precorrin-5B C(1)-methyltransferase (383 aa).

This sequence belongs to the CbiD family.

The catalysed reaction is Co-precorrin-5B + S-adenosyl-L-methionine = Co-precorrin-6A + S-adenosyl-L-homocysteine. Its pathway is cofactor biosynthesis; adenosylcobalamin biosynthesis; cob(II)yrinate a,c-diamide from sirohydrochlorin (anaerobic route): step 6/10. In terms of biological role, catalyzes the methylation of C-1 in cobalt-precorrin-5B to form cobalt-precorrin-6A. This is Cobalt-precorrin-5B C(1)-methyltransferase from Prochlorococcus marinus (strain MIT 9313).